The chain runs to 179 residues: Large ribosomal subunit protein uL6 (179 aa).

It belongs to the universal ribosomal protein uL6 family. Part of the 50S ribosomal subunit.

In terms of biological role, this protein binds to the 23S rRNA, and is important in its secondary structure. It is located near the subunit interface in the base of the L7/L12 stalk, and near the tRNA binding site of the peptidyltransferase center. This is Large ribosomal subunit protein uL6 from Chlorobium phaeovibrioides (strain DSM 265 / 1930) (Prosthecochloris vibrioformis (strain DSM 265)).